A 463-amino-acid chain; its full sequence is Exodeoxyribonuclease 7 large subunit (463 aa).

It belongs to the XseA family. Heterooligomer composed of large and small subunits.

It is found in the cytoplasm. The enzyme catalyses Exonucleolytic cleavage in either 5'- to 3'- or 3'- to 5'-direction to yield nucleoside 5'-phosphates.. Bidirectionally degrades single-stranded DNA into large acid-insoluble oligonucleotides, which are then degraded further into small acid-soluble oligonucleotides. The chain is Exodeoxyribonuclease 7 large subunit from Klebsiella pneumoniae (strain 342).